The chain runs to 241 residues: Superoxide dismutase [Mn] 2, mitochondrial (241 aa).

H60, H108, D197, and H201 together coordinate Mn(2+).

This sequence belongs to the iron/manganese superoxide dismutase family. In terms of assembly, homotetramer. Mn(2+) serves as cofactor.

It is found in the mitochondrion matrix. It carries out the reaction 2 superoxide + 2 H(+) = H2O2 + O2. Its function is as follows. Destroys superoxide anion radicals which are normally produced within the cells and which are toxic to biological systems. The polypeptide is Superoxide dismutase [Mn] 2, mitochondrial (MSD2) (Arabidopsis thaliana (Mouse-ear cress)).